A 144-amino-acid polypeptide reads, in one-letter code: uncharacterized protein (144 aa).

Helical transmembrane passes span 16–36 (FLIF…GAIF), 48–68 (GFIV…ALII), 87–107 (LLPE…LVLL), and 120–140 (VMSL…WYFG).

It is found in the cell membrane. This is an uncharacterized protein from Methanocaldococcus jannaschii (strain ATCC 43067 / DSM 2661 / JAL-1 / JCM 10045 / NBRC 100440) (Methanococcus jannaschii).